The following is a 144-amino-acid chain: Large ribosomal subunit protein uL15 (144 aa).

A disordered region spans residues 1 to 49; sequence MRLNTLSPAAGSKSAPKRVGRGIGSGLGKTAGRGHKGQKSRSGGGVRVG. A compositionally biased stretch (gly residues) spans 21-31; it reads RGIGSGLGKTA.

This sequence belongs to the universal ribosomal protein uL15 family. Part of the 50S ribosomal subunit.

Binds to the 23S rRNA. The chain is Large ribosomal subunit protein uL15 from Shewanella frigidimarina (strain NCIMB 400).